A 101-amino-acid chain; its full sequence is NADH-quinone oxidoreductase subunit K (101 aa).

3 helical membrane passes run 5–25 (PNWYLALSAVLFTIGTFGVLF), 30–50 (IVVLMSVELMLNAVNLTLVTF), and 62–82 (LVFFSIAVAAAEAAVGLAIVI).

It belongs to the complex I subunit 4L family. NDH-1 is composed of 14 different subunits. Subunits NuoA, H, J, K, L, M, N constitute the membrane sector of the complex.

Its subcellular location is the cell inner membrane. The enzyme catalyses a quinone + NADH + 5 H(+)(in) = a quinol + NAD(+) + 4 H(+)(out). Functionally, NDH-1 shuttles electrons from NADH, via FMN and iron-sulfur (Fe-S) centers, to quinones in the respiratory chain. The immediate electron acceptor for the enzyme in this species is believed to be a menaquinone. Couples the redox reaction to proton translocation (for every two electrons transferred, four hydrogen ions are translocated across the cytoplasmic membrane), and thus conserves the redox energy in a proton gradient. In Salinibacter ruber (strain DSM 13855 / M31), this protein is NADH-quinone oxidoreductase subunit K.